We begin with the raw amino-acid sequence, 821 residues long: Ent-isokaur-15-ene synthase (821 aa).

Residues Asp556, Asp560, Asn701, Thr705, and Glu709 each contribute to the Mg(2+) site. A DDXXD motif motif is present at residues 556–560; sequence DDFFD.

The protein belongs to the terpene synthase family. Mg(2+) serves as cofactor.

The catalysed reaction is ent-copalyl diphosphate = ent-isokaurene + diphosphate. It functions in the pathway secondary metabolite biosynthesis; terpenoid biosynthesis. In terms of biological role, involved in the biosynthesis of ent-kaurene diterpenoids natural products. Catalyzes the conversion of ent-copalyl diphosphate to the phytoalexin precursor ent-isokaur-15-ene. The protein is Ent-isokaur-15-ene synthase of Oryza sativa subsp. indica (Rice).